A 204-amino-acid polypeptide reads, in one-letter code: Transcriptional regulator GfcR 1 (204 aa).

It belongs to the purine/pyrimidine phosphoribosyltransferase family. GfcR subfamily.

The polypeptide is Transcriptional regulator GfcR 1 (Methanosarcina barkeri (strain Fusaro / DSM 804)).